Here is a 241-residue protein sequence, read N- to C-terminus: tRNA pseudouridine synthase A (241 aa).

Asp-51 serves as the catalytic Nucleophile. Tyr-110 provides a ligand contact to substrate.

Belongs to the tRNA pseudouridine synthase TruA family. In terms of assembly, homodimer.

It catalyses the reaction uridine(38/39/40) in tRNA = pseudouridine(38/39/40) in tRNA. Functionally, formation of pseudouridine at positions 38, 39 and 40 in the anticodon stem and loop of transfer RNAs. The polypeptide is tRNA pseudouridine synthase A (Campylobacter jejuni subsp. jejuni serotype O:2 (strain ATCC 700819 / NCTC 11168)).